The sequence spans 155 residues: Ribosome maturation factor RimP (155 aa).

It belongs to the RimP family.

Its subcellular location is the cytoplasm. Functionally, required for maturation of 30S ribosomal subunits. The protein is Ribosome maturation factor RimP of Maridesulfovibrio salexigens (strain ATCC 14822 / DSM 2638 / NCIMB 8403 / VKM B-1763) (Desulfovibrio salexigens).